We begin with the raw amino-acid sequence, 870 residues long: Probable disease resistance protein At1g59620 (870 aa).

One can recognise an NB-ARC domain in the interval 123 to 432; that stretch reads DKRNMRQTFS…AAEGMPRPRY (310 aa). Residue 167-174 coordinates ATP; it reads GMGGIGKT. LRR repeat units follow at residues 543–567, 568–590, 703–726, 735–758, 759–786, and 808–833; these read LQLM…IGLL, IHLR…MQNL, MSGI…IYMP, PWHL…ILEK, LLQL…GFPQ, and MPRL…KFIT.

This sequence belongs to the disease resistance NB-LRR family.

In terms of biological role, probable disease resistance protein. This is Probable disease resistance protein At1g59620 from Arabidopsis thaliana (Mouse-ear cress).